The sequence spans 181 residues: Crossover junction endodeoxyribonuclease RuvC (181 aa).

Active-site residues include D7, E67, and D139. Positions 7, 67, and 139 each coordinate Mg(2+).

Belongs to the RuvC family. As to quaternary structure, homodimer which binds Holliday junction (HJ) DNA. The HJ becomes 2-fold symmetrical on binding to RuvC with unstacked arms; it has a different conformation from HJ DNA in complex with RuvA. In the full resolvosome a probable DNA-RuvA(4)-RuvB(12)-RuvC(2) complex forms which resolves the HJ. Mg(2+) serves as cofactor.

The protein resides in the cytoplasm. The enzyme catalyses Endonucleolytic cleavage at a junction such as a reciprocal single-stranded crossover between two homologous DNA duplexes (Holliday junction).. In terms of biological role, the RuvA-RuvB-RuvC complex processes Holliday junction (HJ) DNA during genetic recombination and DNA repair. Endonuclease that resolves HJ intermediates. Cleaves cruciform DNA by making single-stranded nicks across the HJ at symmetrical positions within the homologous arms, yielding a 5'-phosphate and a 3'-hydroxyl group; requires a central core of homology in the junction. The consensus cleavage sequence is 5'-(A/T)TT(C/G)-3'. Cleavage occurs on the 3'-side of the TT dinucleotide at the point of strand exchange. HJ branch migration catalyzed by RuvA-RuvB allows RuvC to scan DNA until it finds its consensus sequence, where it cleaves and resolves the cruciform DNA. The polypeptide is Crossover junction endodeoxyribonuclease RuvC (Cupriavidus pinatubonensis (strain JMP 134 / LMG 1197) (Cupriavidus necator (strain JMP 134))).